The primary structure comprises 825 residues: Zinc finger protein 28 (825 aa).

Residues 26-65 (RPGGGPAAGTVVAPGSPDRGRPRSRNSLASQDQQGAVTSG) form a disordered region. Residues 33-42 (AGTVVAPGSP) are compositionally biased toward low complexity. Residues 51–65 (NSLASQDQQGAVTSG) show a composition bias toward polar residues. In terms of domain architecture, KRAB spans 103–174 (VTFGDVAVVF…KRKMRKGQHL (72 aa)). 14 consecutive C2H2-type zinc fingers follow at residues 377 to 399 (FQCNECKKTFTQSSSLTVHQRIH), 405 to 427 (YKCNQCGKAFSDGSSFARHQRCH), 433 to 456 (YECPECGKAFIQNTSLVRHWRYYH), 462 to 484 (FDCIDCGKAFSDHIGLNQHRRIH), 490 to 512 (YTCEVCHKSFRYGSSLTVHQRIH), 518 to 540 (YECEICRKAFSHHASLTQHQRVH), 546 to 568 (FKCKECGKAFRQNIHLASHWRIH), 574 to 596 (FECGECGKSFSISSQLATHQRIH), 602 to 624 (YECKVCRKAFTQKAHLAQHQKTH), 630 to 652 (YECKECGKAFSQTTHLIQHQRVH), 658 to 680 (YKCLECGKAFGDNSSCTQHRRLH), 686 to 708 (YECVECGKTFKTKSSLICHRRCH), 714 to 736 (YECSACGKAFSHRQSLSVHQRIH), and 742 to 764 (YECKECRKTFIQIGHLNQHKRVH). A C2H2-type 15; degenerate zinc finger spans residues 770–792 (YNYKKGRRAFRQTAHFAHHQQIH).

The protein belongs to the krueppel C2H2-type zinc-finger protein family. In terms of tissue distribution, expressed predominantly in ovary.

The protein localises to the nucleus. Functionally, may be involved in transcriptional regulation. May have a role in embryonic development. The chain is Zinc finger protein 28 (Zfp28) from Mus musculus (Mouse).